The following is a 633-amino-acid chain: Threonine--tRNA ligase (633 aa).

The region spanning 1-61 (MPAIRLPDGS…DHDVDLAIVT (61 aa)) is the TGS domain. A catalytic region spans residues 242-533 (DHRKLGRQLD…LIEHHAGAMP (292 aa)). Positions 333, 384, and 510 each coordinate Zn(2+).

The protein belongs to the class-II aminoacyl-tRNA synthetase family. Homodimer. It depends on Zn(2+) as a cofactor.

The protein localises to the cytoplasm. It carries out the reaction tRNA(Thr) + L-threonine + ATP = L-threonyl-tRNA(Thr) + AMP + diphosphate + H(+). In terms of biological role, catalyzes the attachment of threonine to tRNA(Thr) in a two-step reaction: L-threonine is first activated by ATP to form Thr-AMP and then transferred to the acceptor end of tRNA(Thr). Also edits incorrectly charged L-seryl-tRNA(Thr). The protein is Threonine--tRNA ligase of Laribacter hongkongensis (strain HLHK9).